We begin with the raw amino-acid sequence, 668 residues long: MSKEQILLRINQLKEQLNLWSKQYYVDDNPSVDDTEYDLALKELISLENLYPEFITSDSPSQKVGGTVSEKFLKITHKTPMLSLGNVFNFDEFLEFNTQVSKVSNNLNNEYVAELKIDGLSISLVYENGVLVSAATRGNGVIGEDVTTNVRTIKSIPLKISKKERVEVRGEIYLSKAEFEKINQKRLLNNEDLFINPRNAAAGTLRQLDSKIVASRNLDAFLYYYISDDSPNLNQYESILKLNQLGFKTNKETMLCKNLDQIKAYIDKYTNLKNDLDYQIDGIVFKINDKNLQNSLGFTSKIPKWAIAYKFPAEIKQTKLLDIFATVGRTGKITYNAKLEPVFLMGATISAATLNNAEYIKSKDLRINSIVKIKKAGDVIPEVIEAIKDETFYNLEVFQPILYCPNCHSLLEKNENEVDQFCINSSCSMKILRSLQHFSSREAMNIVSLGDRSLEILFNLEIIQNISDIYKLEEYKDQILAIENFGLKSYLNLIDSINMSKNNSLEKVLFGLGIRHIGSKTAKILARKYQNIDNLMKASYDELIQINSIGESLALSIIDWFKIEDNLKLINELKSFNINFNYLGAKINSDSIIANKTFVITGTLTRPREEFKTLIENNAGKISGSISKQTDYLLAGNNVGSKLEKAKKLGVIIIDEQQFFDLLKSEKG.

Residues aspartate 34–aspartate 38, serine 83–leucine 84, and glutamate 114 contribute to the NAD(+) site. Lysine 116 acts as the N6-AMP-lysine intermediate in catalysis. NAD(+) is bound by residues arginine 137, glutamate 171, lysine 286, and lysine 310. Cysteine 404, cysteine 407, cysteine 422, and cysteine 427 together coordinate Zn(2+). The region spanning asparagine 588–glycine 668 is the BRCT domain.

It belongs to the NAD-dependent DNA ligase family. LigA subfamily. Mg(2+) serves as cofactor. The cofactor is Mn(2+).

The enzyme catalyses NAD(+) + (deoxyribonucleotide)n-3'-hydroxyl + 5'-phospho-(deoxyribonucleotide)m = (deoxyribonucleotide)n+m + AMP + beta-nicotinamide D-nucleotide.. In terms of biological role, DNA ligase that catalyzes the formation of phosphodiester linkages between 5'-phosphoryl and 3'-hydroxyl groups in double-stranded DNA using NAD as a coenzyme and as the energy source for the reaction. It is essential for DNA replication and repair of damaged DNA. This Mycoplasma capricolum subsp. capricolum (strain California kid / ATCC 27343 / NCTC 10154) protein is DNA ligase.